The primary structure comprises 174 residues: Magnetosome protein MamT (174 aa).

The Cytoplasmic segment spans residues 1 to 9 (MGTPGGGRR). A helical transmembrane segment spans residues 10–28 (WMTLISITLLMVVGLGLYW). Residues 29–174 (DELSLSAGIS…EKKSGIKWLL (146 aa)) are Lumenal-facing. Positions 87-107 (VMPGTGMPHPYVGDCIQCHLM) match the MCR (magnetochrome) 1 motif. Positions 101, 104, 105, 152, 155, and 156 each coordinate heme. The short motif at 138–158 (ILPTTRQPHPPAGRCIKCHDI) is the MCR 2 element.

The protein belongs to the magnetosome MamT family. It depends on heme as a cofactor.

It is found in the magnetosome membrane. Functionally, may play a role in magnetite crystal maturation. May transfer electrons to balance the Fe(2+)-Fe(3+) ratio during magnetite formation. This is Magnetosome protein MamT from Magnetospirillum gryphiswaldense (strain DSM 6361 / JCM 21280 / NBRC 15271 / MSR-1).